The primary structure comprises 101 residues: Large ribosomal subunit protein eL21 (101 aa).

The segment covering Met1 to Lys18 has biased composition (basic residues). The segment at Met1–Arg23 is disordered.

It belongs to the eukaryotic ribosomal protein eL21 family.

This Saccharolobus islandicus (strain Y.G.57.14 / Yellowstone #1) (Sulfolobus islandicus) protein is Large ribosomal subunit protein eL21.